Consider the following 201-residue polypeptide: 3-isopropylmalate dehydratase small subunit (201 aa).

This sequence belongs to the LeuD family. LeuD type 1 subfamily. Heterodimer of LeuC and LeuD.

It catalyses the reaction (2R,3S)-3-isopropylmalate = (2S)-2-isopropylmalate. The protein operates within amino-acid biosynthesis; L-leucine biosynthesis; L-leucine from 3-methyl-2-oxobutanoate: step 2/4. Its function is as follows. Catalyzes the isomerization between 2-isopropylmalate and 3-isopropylmalate, via the formation of 2-isopropylmaleate. In Methylorubrum extorquens (strain ATCC 14718 / DSM 1338 / JCM 2805 / NCIMB 9133 / AM1) (Methylobacterium extorquens), this protein is 3-isopropylmalate dehydratase small subunit.